A 277-amino-acid polypeptide reads, in one-letter code: Exosome complex component Rrp42 (277 aa).

This sequence belongs to the RNase PH family. Rrp42 subfamily. In terms of assembly, component of the archaeal exosome complex. Forms a hexameric ring-like arrangement composed of 3 Rrp41-Rrp42 heterodimers. The hexameric ring associates with a trimer of Rrp4 and/or Csl4 subunits.

It is found in the cytoplasm. In terms of biological role, non-catalytic component of the exosome, which is a complex involved in RNA degradation. Contributes to the structuring of the Rrp41 active site. The protein is Exosome complex component Rrp42 of Pyrococcus furiosus (strain ATCC 43587 / DSM 3638 / JCM 8422 / Vc1).